A 256-amino-acid polypeptide reads, in one-letter code: GDSL esterase/lipase At1g18120 (256 aa).

The first 49 residues, 1-49, serve as a signal peptide directing secretion; sequence MYRVYKNNKFILISIPRITNKLWQKNCNLVILLGVLLVLTLFHDPIIVA. Ser67 (nucleophile) is an active-site residue. Asn181 carries N-linked (GlcNAc...) asparagine glycosylation.

It belongs to the 'GDSL' lipolytic enzyme family.

It is found in the secreted. In Arabidopsis thaliana (Mouse-ear cress), this protein is GDSL esterase/lipase At1g18120.